The sequence spans 280 residues: 2-dehydro-3-deoxyphosphooctonate aldolase (280 aa).

It belongs to the KdsA family.

It is found in the cytoplasm. It carries out the reaction D-arabinose 5-phosphate + phosphoenolpyruvate + H2O = 3-deoxy-alpha-D-manno-2-octulosonate-8-phosphate + phosphate. The protein operates within carbohydrate biosynthesis; 3-deoxy-D-manno-octulosonate biosynthesis; 3-deoxy-D-manno-octulosonate from D-ribulose 5-phosphate: step 2/3. Its pathway is bacterial outer membrane biogenesis; lipopolysaccharide biosynthesis. This Neisseria gonorrhoeae (strain NCCP11945) protein is 2-dehydro-3-deoxyphosphooctonate aldolase.